Here is a 141-residue protein sequence, read N- to C-terminus: Hemoglobin subunit alpha-2 (141 aa).

In terms of domain architecture, Globin spans 1–141 (VLSEGNKKII…VTYQLSSLYR (141 aa)). Residue H59 coordinates O2. H88 is a binding site for heme b.

It belongs to the globin family. In terms of assembly, heterotetramer of two alpha chains and two beta chains. In terms of tissue distribution, red blood cells.

Involved in oxygen transport from the lung to the various peripheral tissues. The protein is Hemoglobin subunit alpha-2 of Torpedo marmorata (Marbled electric ray).